Consider the following 111-residue polypeptide: MRGARCHNRRCYVYGHLYDSGLGYPALIADEKGGKVVGELYEINEQHLVSLDELEDYAPDRNHNLYERVLHTLEDGSHCYLYVVTPDSPLVRTLIPSGDWLDWTENKKSTE.

14-17 (YGHL) lines the substrate pocket. Glu55 serves as the catalytic Proton acceptor.

The protein belongs to the gamma-glutamylcyclotransferase family.

Its function is as follows. Putative gamma-glutamylcyclotransferase. In Halalkalibacterium halodurans (strain ATCC BAA-125 / DSM 18197 / FERM 7344 / JCM 9153 / C-125) (Bacillus halodurans), this protein is Putative gamma-glutamylcyclotransferase BH1612.